Reading from the N-terminus, the 122-residue chain is Large ribosomal subunit protein uL14 (122 aa).

The protein belongs to the universal ribosomal protein uL14 family. Part of the 50S ribosomal subunit. Forms a cluster with proteins L3 and L19. In the 70S ribosome, L14 and L19 interact and together make contacts with the 16S rRNA in bridges B5 and B8.

In terms of biological role, binds to 23S rRNA. Forms part of two intersubunit bridges in the 70S ribosome. This is Large ribosomal subunit protein uL14 from Nostoc punctiforme (strain ATCC 29133 / PCC 73102).